The primary structure comprises 130 residues: Small ribosomal subunit protein uS9 (130 aa).

The tract at residues 104–130 (LTRDPRMKERRKYGLKKARKAPQFSKR) is disordered. Basic residues predominate over residues 111–130 (KERRKYGLKKARKAPQFSKR).

This sequence belongs to the universal ribosomal protein uS9 family.

The sequence is that of Small ribosomal subunit protein uS9 from Moorella thermoacetica (strain ATCC 39073 / JCM 9320).